A 302-amino-acid polypeptide reads, in one-letter code: Lipoyl synthase (302 aa).

[4Fe-4S] cluster contacts are provided by Cys-54, Cys-59, Cys-65, Cys-80, Cys-84, Cys-87, and Ser-291. The region spanning 66–280 (WSRKTATYML…RIYGKSIGFK (215 aa)) is the Radical SAM core domain.

It belongs to the radical SAM superfamily. Lipoyl synthase family. Requires [4Fe-4S] cluster as cofactor.

It is found in the cytoplasm. The catalysed reaction is [[Fe-S] cluster scaffold protein carrying a second [4Fe-4S](2+) cluster] + N(6)-octanoyl-L-lysyl-[protein] + 2 oxidized [2Fe-2S]-[ferredoxin] + 2 S-adenosyl-L-methionine + 4 H(+) = [[Fe-S] cluster scaffold protein] + N(6)-[(R)-dihydrolipoyl]-L-lysyl-[protein] + 4 Fe(3+) + 2 hydrogen sulfide + 2 5'-deoxyadenosine + 2 L-methionine + 2 reduced [2Fe-2S]-[ferredoxin]. It participates in protein modification; protein lipoylation via endogenous pathway; protein N(6)-(lipoyl)lysine from octanoyl-[acyl-carrier-protein]: step 2/2. Catalyzes the radical-mediated insertion of two sulfur atoms into the C-6 and C-8 positions of the octanoyl moiety bound to the lipoyl domains of lipoate-dependent enzymes, thereby converting the octanoylated domains into lipoylated derivatives. The polypeptide is Lipoyl synthase (Leptospira borgpetersenii serovar Hardjo-bovis (strain JB197)).